The primary structure comprises 595 residues: Phosphomethylpyrimidine synthase (595 aa).

Basic and acidic residues predominate over residues 97-120 (GRDVRPEDNGFTKDDDPRAAREVF). A disordered region spans residues 97–134 (GRDVRPEDNGFTKDDDPRAAREVFPRTSSHKPLRAKKG). The span at 124-133 (SSHKPLRAKK) shows a compositional bias: basic residues. Substrate-binding positions include Asn-202, Met-231, Tyr-260, His-296, 316-318 (SRG), 357-360 (DGLR), and Glu-396. Residue His-400 coordinates Zn(2+). Substrate is bound at residue Tyr-423. Residue His-464 coordinates Zn(2+). Cys-544, Cys-547, and Cys-552 together coordinate [4Fe-4S] cluster.

Belongs to the ThiC family. [4Fe-4S] cluster serves as cofactor.

The catalysed reaction is 5-amino-1-(5-phospho-beta-D-ribosyl)imidazole + S-adenosyl-L-methionine = 4-amino-2-methyl-5-(phosphooxymethyl)pyrimidine + CO + 5'-deoxyadenosine + formate + L-methionine + 3 H(+). It participates in cofactor biosynthesis; thiamine diphosphate biosynthesis. Catalyzes the synthesis of the hydroxymethylpyrimidine phosphate (HMP-P) moiety of thiamine from aminoimidazole ribotide (AIR) in a radical S-adenosyl-L-methionine (SAM)-dependent reaction. This is Phosphomethylpyrimidine synthase from Halalkalibacterium halodurans (strain ATCC BAA-125 / DSM 18197 / FERM 7344 / JCM 9153 / C-125) (Bacillus halodurans).